The following is a 212-amino-acid chain: Probable 2-dehydro-3-deoxy-6-phosphogalactonate aldolase (212 aa).

2-dehydro-3-deoxy-6-phospho-D-galactonate is bound at residue Arg-18. Residue Glu-41 is the Proton donor/acceptor of the active site. Positions 70, 130, 160, 180, and 181 each coordinate 2-dehydro-3-deoxy-6-phospho-D-galactonate. Residue Lys-130 is the Schiff-base intermediate with substrate of the active site.

It belongs to the KHG/KDPG aldolase family. In terms of assembly, homotrimer.

It carries out the reaction 2-dehydro-3-deoxy-6-phospho-D-galactonate = D-glyceraldehyde 3-phosphate + pyruvate. It participates in carbohydrate acid metabolism; D-galactonate degradation; D-glyceraldehyde 3-phosphate and pyruvate from D-galactonate: step 3/3. Involved in the degradation of galactose via the DeLey-Doudoroff pathway. Catalyzes the reversible, stereospecific retro-aldol cleavage of 2-keto-3-deoxy-6-phosphogalactonate (KDPGal) to pyruvate and D-glyceraldehyde-3-phosphate. The protein is Probable 2-dehydro-3-deoxy-6-phosphogalactonate aldolase (dgoA) of Rhizobium meliloti (strain 1021) (Ensifer meliloti).